A 71-amino-acid polypeptide reads, in one-letter code: Translation initiation factor IF-1 (71 aa).

An S1-like domain is found at 1 to 71 (MAKDAIKLRA…TKGRITYRHK (71 aa)).

Belongs to the IF-1 family. As to quaternary structure, component of the 30S ribosomal translation pre-initiation complex which assembles on the 30S ribosome in the order IF-2 and IF-3, IF-1 and N-formylmethionyl-tRNA(fMet); mRNA recruitment can occur at any time during PIC assembly.

It localises to the cytoplasm. One of the essential components for the initiation of protein synthesis. Stabilizes the binding of IF-2 and IF-3 on the 30S subunit to which N-formylmethionyl-tRNA(fMet) subsequently binds. Helps modulate mRNA selection, yielding the 30S pre-initiation complex (PIC). Upon addition of the 50S ribosomal subunit IF-1, IF-2 and IF-3 are released leaving the mature 70S translation initiation complex. The polypeptide is Translation initiation factor IF-1 (Mycoplasmopsis synoviae (strain 53) (Mycoplasma synoviae)).